Consider the following 50-residue polypeptide: Putative protein HokF (50 aa).

The chain crosses the membrane as a helical span at residues 5-25 (YALVAVIVLCLTVPGFTLLVG).

Belongs to the Hok/Gef family.

It is found in the cell inner membrane. Toxic component of a type I toxin-antitoxin (TA) system. When overexpressed kills cells within minutes; causes collapse of the transmembrane potential and arrest of respiration. Its toxic effect is probably neutralized by an antisense antitoxin Sok RNA. The polypeptide is Putative protein HokF (hokF) (Escherichia coli O157:H7).